We begin with the raw amino-acid sequence, 125 residues long: Cardioactive peptide (125 aa).

A signal peptide spans 1–22 (MTVSRVCLLLLVALVYLDCCYA). A propeptide spanning residues 23 to 42 (ASIPRNFDPRLSEEIVMAPK) is cleaved from the precursor. Residues C47 and C53 are joined by a disulfide bond. C53 carries the post-translational modification Cysteine amide. The propeptide occupies 57 to 125 (RSQGPPGMPA…RRKQKEAYIQ (69 aa)).

Abdominal perivisceral organ; major neurohemal release site. Expressed in 116 neurons in post-embryonic central nervous system. Nine pairs of cells are observed in the brain, 4.5 pairs in the subesophageal ganglion, three pairs in each thoracic ganglion (T1-T3), three pairs in the first abdominal ganglion (A1), five pairs each in the second to sixth abdominal ganglia (A2-A6) and 7.5 pairs in the terminal ganglion. Expressed in every ganglion in each post-embryonic stage, except in the thoracic ganglia of first- and second-instar larvae. Colocalizes with CAP2b in median neurosecretory cells during the last larval instar through to adults.

The protein localises to the secreted. Cardioregulatory neurohormone that increases heart beat rate during adult wing inflation; has no effect on beat amplitude. The effect of CCAP is both ino- and chronotropic. In Manduca sexta (Tobacco hawkmoth), this protein is Cardioactive peptide.